A 584-amino-acid polypeptide reads, in one-letter code: 2-isopropylmalate synthase (584 aa).

A Pyruvate carboxyltransferase domain is found at 40–314 (PRWCAVDLRD…DPQIDFSDIE (275 aa)). Mg(2+) contacts are provided by Asp49, His253, His255, and Asn289. Residues 456–584 (SRDGSGSTWG…VRDAQEAAQD (129 aa)) are regulatory domain.

It belongs to the alpha-IPM synthase/homocitrate synthase family. LeuA type 2 subfamily. Homodimer. The cofactor is Mg(2+).

The protein localises to the cytoplasm. It catalyses the reaction 3-methyl-2-oxobutanoate + acetyl-CoA + H2O = (2S)-2-isopropylmalate + CoA + H(+). Its pathway is amino-acid biosynthesis; L-leucine biosynthesis; L-leucine from 3-methyl-2-oxobutanoate: step 1/4. Its function is as follows. Catalyzes the condensation of the acetyl group of acetyl-CoA with 3-methyl-2-oxobutanoate (2-ketoisovalerate) to form 3-carboxy-3-hydroxy-4-methylpentanoate (2-isopropylmalate). The protein is 2-isopropylmalate synthase of Kocuria rhizophila (strain ATCC 9341 / DSM 348 / NBRC 103217 / DC2201).